A 308-amino-acid polypeptide reads, in one-letter code: uncharacterized protein (308 aa).

Residues 43 to 55 (SQYGTWADQHQNG) show a composition bias toward polar residues. The segment at 43–289 (SQYGTWADQH…KEERSEECSP (247 aa)) is disordered. A Phosphoserine modification is found at Ser62. Residues 80 to 90 (HLSSYTESTSV) show a composition bias toward polar residues. Positions 91-109 (EQRDSSRDRRSSSVDRSSS) are enriched in basic and acidic residues. Over residues 136-152 (IHQTSVLDSSALKTRVQ) the composition is skewed to polar residues. Basic residues predominate over residues 153 to 168 (LSKRSRRRAPISHSLR). Ser166 carries the post-translational modification Phosphoserine. 2 stretches are compositionally biased toward basic and acidic residues: residues 175-186 (SESRSPLEEESH) and 193-216 (DSTE…ERTP). Ser205, Ser259, Ser262, and Ser288 each carry phosphoserine.

This is an uncharacterized protein from Mus musculus (Mouse).